The primary structure comprises 962 residues: Glycine dehydrogenase (decarboxylating) (962 aa).

Lys709 carries the N6-(pyridoxal phosphate)lysine modification.

The protein belongs to the GcvP family. The glycine cleavage system is composed of four proteins: P, T, L and H. Pyridoxal 5'-phosphate serves as cofactor.

It carries out the reaction N(6)-[(R)-lipoyl]-L-lysyl-[glycine-cleavage complex H protein] + glycine + H(+) = N(6)-[(R)-S(8)-aminomethyldihydrolipoyl]-L-lysyl-[glycine-cleavage complex H protein] + CO2. In terms of biological role, the glycine cleavage system catalyzes the degradation of glycine. The P protein binds the alpha-amino group of glycine through its pyridoxal phosphate cofactor; CO(2) is released and the remaining methylamine moiety is then transferred to the lipoamide cofactor of the H protein. The polypeptide is Glycine dehydrogenase (decarboxylating) (Shewanella sediminis (strain HAW-EB3)).